A 485-amino-acid polypeptide reads, in one-letter code: Glutamyl-tRNA(Gln) amidotransferase subunit A (485 aa).

Active-site charge relay system residues include Lys79 and Ser154. Catalysis depends on Ser178, which acts as the Acyl-ester intermediate.

Belongs to the amidase family. GatA subfamily. Heterotrimer of A, B and C subunits.

It carries out the reaction L-glutamyl-tRNA(Gln) + L-glutamine + ATP + H2O = L-glutaminyl-tRNA(Gln) + L-glutamate + ADP + phosphate + H(+). Allows the formation of correctly charged Gln-tRNA(Gln) through the transamidation of misacylated Glu-tRNA(Gln) in organisms which lack glutaminyl-tRNA synthetase. The reaction takes place in the presence of glutamine and ATP through an activated gamma-phospho-Glu-tRNA(Gln). In Staphylococcus aureus (strain MRSA252), this protein is Glutamyl-tRNA(Gln) amidotransferase subunit A.